Reading from the N-terminus, the 455-residue chain is Probable hexose phosphate transport protein (455 aa).

A run of 5 helical transmembrane segments spans residues 34–54, 70–90, 113–133, 161–181, and 185–205; these read IFYS…SFTF, LGII…VSGV, IFFG…LNGW, VWST…GFII, and GWRG…LVLI. The interval 219–242 is disordered; that stretch reads PIEKYKRDPHHAHHEGKSASEGTE. A run of 6 helical transmembrane segments spans residues 257 to 277, 302 to 322, 331 to 351, 363 to 383, 394 to 414, and 424 to 444; these read YVLT…IYIV, FCVS…GWLS, GPMN…MWFS, LLFV…LAAA, ASGF…YPLG, and GFFI…LPTW.

This sequence belongs to the major facilitator superfamily. Organophosphate:Pi antiporter (OPA) (TC 2.A.1.4) family.

Its subcellular location is the cell membrane. Its function is as follows. Transport protein for sugar phosphate uptake. The protein is Probable hexose phosphate transport protein (uhpC) of Chlamydia pneumoniae (Chlamydophila pneumoniae).